The following is an 806-amino-acid chain: MTSIELLSPLIHDKFRFSTCCSTSSLLYLHASSFFRDRSFGFRQNPNRFVSNSSIQLPQSVPGSINQERFNLWQGFSRKKSTSSSRTIVNCQEGDQKASSSEGEGKTNKDKGRKQGKNELWWSKGKKWQWKPIIQAQEIGVMLLQLGIVMFVVRLLRPGIPLPGSEPRTQTTFMSVPYSDFLSKVNNDEVQKVEVDGFHVLFKLKDDGNLQESETSSSSIKLSESSETMLRSVAPTKRVVYSTTRPRDIKTPYEKMLENNVEFGSPDKRSGGFFNSGLIVLFYIAVLAGLLHRFPVNFSQSTTGQLRTRKSGGPGGGKVSGDGETITFADVAGVDEAKEELEEIVEFLKNPDRYVRLGARPPRGVLLVGLPGTGKTLLAKAVAGESDVPFISCSASEFVELYVGMGASRVRDLFARAKKEAPSIIFIDEIDAVAKSRDGKFRMVSNDEREQTLNQLLTEMDGFDSSSAVIVLGATNRADVLDPALRRPGRFDRVVTVESPDKVGRESILKVHVSKKELPLGDDVNLASIASMTTGFTGADLANLVNEAALLAGRKSKMTVDKIDFIHAVERSIAGIEKKTARLKGSEKAVVARHEAGHAVVGTAVASLLSGQSRVEKLSILPRSGGALGFTYIPPTHEDRYLLFIDELHGRLVTLLGGRAAEEVVYSGRISTGALDDIRRATDMAYKAVAEYGLNEKIGPVSVATLSAGGIDDSGGSPWGRDQGHLVDLVQREVTNLLQSALDVALTVVRANPDVLEGLGAQLEDEEKVEGEELQKWLNRVVPSEELAVFIKGKQTALLPAQASSS.

Residues 1 to 62 (MTSIELLSPL…SSIQLPQSVP (62 aa)) constitute a chloroplast transit peptide. Positions 84–116 (SSRTIVNCQEGDQKASSSEGEGKTNKDKGRKQG) are disordered. Transmembrane regions (helical) follow at residues 133–153 (IIQAQEIGVMLLQLGIVMFVV) and 271–291 (GGFFNSGLIVLFYIAVLAGLL). 369-376 (GLPGTGKT) is an ATP binding site. Position 594 (His-594) interacts with Zn(2+). Glu-595 is a catalytic residue. Residues His-598 and Asp-677 each contribute to the Zn(2+) site.

This sequence in the N-terminal section; belongs to the AAA ATPase family. The protein in the C-terminal section; belongs to the peptidase M41 family. Zn(2+) is required as a cofactor.

The protein localises to the plastid. It localises to the chloroplast thylakoid membrane. In terms of biological role, probable ATP-dependent zinc metallopeptidase. This Arabidopsis thaliana (Mouse-ear cress) protein is ATP-dependent zinc metalloprotease FTSH 9, chloroplastic (FTSH9).